Reading from the N-terminus, the 635-residue chain is 5-aminolevulinate synthase, non-specific, mitochondrial (635 aa).

The N-terminal 56 residues, 1–56 (MEAVVRRCPFLARVSQAFLQKAGPSLLFYAQHCPKMMEAAPPAAARGLATSASRGQ), are a transit peptide targeting the mitochondrion. Positions 44-66 (AARGLATSASRGQQVEETPAAQP) are enriched in low complexity. The interval 44-94 (AARGLATSASRGQQVEETPAAQPEAKKAKEVAQQNTDGSQPPAGHPPAAAV) is disordered. Arg212, Ser329, and Lys348 together coordinate substrate. The pyridoxal 5'-phosphate site is built by Ser381, His409, and Thr437. Lys440 is an active-site residue. Residue Lys440 is modified to N6-(pyridoxal phosphate)lysine. Residues Thr469 and Thr470 each coordinate pyridoxal 5'-phosphate. Thr557 provides a ligand contact to substrate.

It belongs to the class-II pyridoxal-phosphate-dependent aminotransferase family. Homodimer. It depends on pyridoxal 5'-phosphate as a cofactor. Ubiquitous.

Its subcellular location is the mitochondrion inner membrane. The enzyme catalyses succinyl-CoA + glycine + H(+) = 5-aminolevulinate + CO2 + CoA. Its pathway is porphyrin-containing compound metabolism; protoporphyrin-IX biosynthesis; 5-aminolevulinate from glycine: step 1/1. Catalyzes the pyridoxal 5'-phosphate (PLP)-dependent condensation of succinyl-CoA and glycine to form aminolevulinic acid (ALA), with CoA and CO2 as by-products. The chain is 5-aminolevulinate synthase, non-specific, mitochondrial (ALAS1) from Gallus gallus (Chicken).